The following is a 171-amino-acid chain: N5-carboxyaminoimidazole ribonucleotide mutase (171 aa).

The substrate site is built by Ser10, Asp13, and Arg40.

The protein belongs to the AIR carboxylase family. Class I subfamily.

It carries out the reaction 5-carboxyamino-1-(5-phospho-D-ribosyl)imidazole + H(+) = 5-amino-1-(5-phospho-D-ribosyl)imidazole-4-carboxylate. It functions in the pathway purine metabolism; IMP biosynthesis via de novo pathway; 5-amino-1-(5-phospho-D-ribosyl)imidazole-4-carboxylate from 5-amino-1-(5-phospho-D-ribosyl)imidazole (N5-CAIR route): step 2/2. In terms of biological role, catalyzes the conversion of N5-carboxyaminoimidazole ribonucleotide (N5-CAIR) to 4-carboxy-5-aminoimidazole ribonucleotide (CAIR). The chain is N5-carboxyaminoimidazole ribonucleotide mutase from Thermotoga maritima (strain ATCC 43589 / DSM 3109 / JCM 10099 / NBRC 100826 / MSB8).